A 174-amino-acid polypeptide reads, in one-letter code: uncharacterized protein (174 aa).

To E.coli HemX C-terminal region.

This is an uncharacterized protein from Haemophilus influenzae (strain ATCC 51907 / DSM 11121 / KW20 / Rd).